The chain runs to 396 residues: NASP-related protein sim3 (396 aa).

Residues 1 to 31 (MSSDTKTLENSKGNSATDADTKNPSSSDSRA) are disordered. TPR repeat units lie at residues 32 to 65 (IEQLVTQGNMAYAQKNYEEAVDKYGQALMQSESI) and 89 to 122 (IENSQVLGNALGAKESVSQATESFEEPEAIGSFT). The interval 135 to 164 (NEENSSIAHPEKESEEKETNEASPASEEDE) is disordered. Residues 143–154 (HPEKESEEKETN) are compositionally biased toward basic and acidic residues. Residues 199 to 232 (ADIYDLLGELSLEIENFSQASQDLKTALEWKEKV) form a TPR 3 repeat. Residues 267 to 329 (CEHVEKAAEI…QKTLDLKHGA (63 aa)) adopt a coiled-coil conformation. A compositionally biased stretch (basic and acidic residues) spans 284-301 (RENEVTDKKGKGKQKAEE). Disordered regions lie at residues 284–307 (RENEVTDKKGKGKQKAEESTLTSD) and 334–396 (EAVM…KKKD). Residues 343–353 (SSLLSKDSSSL) are compositionally biased toward low complexity.

This sequence belongs to the NASP family. Interacts with cnp1, hht1, hht2 and hht3; has a preference for CENP-A (cnp1) over histone H3 (hht1/2/3).

Its subcellular location is the nucleus. In terms of biological role, histone H3 and H3-like CENP-A-specific chaperone. Promotes delivery and incorporation of CENP-A in centromeric chromatin, probably by escorting nascent CENP-A to CENP-A chromatin assembly factors. Required for central core silencing and normal chromosome segregation. This chain is NASP-related protein sim3 (sim3), found in Schizosaccharomyces pombe (strain 972 / ATCC 24843) (Fission yeast).